The chain runs to 218 residues: Small ribosomal subunit protein uS3c (218 aa).

The 72-residue stretch at 47-118 (VQKNIRISSG…KLNIAITRIS (72 aa)) folds into the KH type-2 domain.

This sequence belongs to the universal ribosomal protein uS3 family. In terms of assembly, part of the 30S ribosomal subunit.

It localises to the plastid. The protein localises to the chloroplast. The chain is Small ribosomal subunit protein uS3c (rps3) from Lepidium virginicum (Virginia pepperweed).